A 105-amino-acid polypeptide reads, in one-letter code: Cuticle protein AMP1A (105 aa).

The tract at residues 1-21 is disordered; it reads DRDAQTLTDERSDQGDGNFRY. One can recognise a Chitin-binding type R&amp;R domain in the interval 16–81; sequence DGNFRYEFET…PSSDLLPVGP (66 aa).

Arthrodial membrane.

In Homarus americanus (American lobster), this protein is Cuticle protein AMP1A.